The primary structure comprises 540 residues: Amino acid transporter AVT1B (540 aa).

Positions 1–11 (MNHSTSDQSLY) are enriched in polar residues. Residues 1–55 (MNHSTSDQSLYIESDDGDDERKHLSDDEDDDGTLSDTSDAYNQNQHHLSKASPYS) form a disordered region. 11 consecutive transmembrane segments (helical) span residues 155–175 (AVLN…PYAV), 180–200 (WLGL…GLLL), 227–247 (ILVS…YIIL), 273–293 (LFAL…DLSV), 297–317 (ISAG…WVGL), 332–352 (LATL…HGVF), 367–387 (AVLL…AVMG), 412–432 (IALW…LSPV), 452–474 (IAIR…FFGL), 478–500 (LIGS…LSIL), and 511–531 (ICIL…YSAL).

Belongs to the amino acid/polyamine transporter 2 family. Amino acid/auxin permease (AAAP) (TC 2.A.18.5) subfamily.

The protein resides in the membrane. The polypeptide is Amino acid transporter AVT1B (Arabidopsis thaliana (Mouse-ear cress)).